A 297-amino-acid polypeptide reads, in one-letter code: HTH-type transcriptional regulator PerR (297 aa).

One can recognise an HTH lysR-type domain in the interval 7–64 (APLNLLRAFEAAGRTGAFALAASELELSPSAISHAIRKLENLLDVRLFQRSTREITLT). Residues 24 to 44 (FALAASELELSPSAISHAIRK) constitute a DNA-binding region (H-T-H motif).

The protein belongs to the LysR transcriptional regulatory family.

Its function is as follows. Apparent regulatory gene involved in peroxide resistance in stationary phase. This is HTH-type transcriptional regulator PerR (perR) from Escherichia coli (strain K12).